Consider the following 1083-residue polypeptide: UPF0182 protein BAD_0641 (1083 aa).

The segment at 1–72 (MSFFDMFGPM…TSKPNRPRKP (72 aa)) is disordered. A run of 7 helical transmembrane segments spans residues 78–98 (IFIGVVLALAIVIGLFFALAQ), 125–145 (LWLAYAVLIAAVGFISATLAI), 178–198 (IAVVISLIVGLVFGSQFNANW), 239–259 (SLLLLAGIIFSIVTHVLMGGI), 281–301 (IGIWLMLNMFAWAANQVLGVF), 325–345 (VTFIMAAITAILGVILGLWIM), and 372–392 (VAIASAIVVSLVLTVAWPVLL). Residues 976-1061 (DSGASAGDAE…SDAAMKKGDW (86 aa)) are disordered. Composition is skewed to basic and acidic residues over residues 991 to 1013 (TDDKQDAKNDDSADGKTNTDGKQ) and 1050 to 1060 (KDSDAAMKKGD).

Belongs to the UPF0182 family.

Its subcellular location is the cell membrane. In Bifidobacterium adolescentis (strain ATCC 15703 / DSM 20083 / NCTC 11814 / E194a), this protein is UPF0182 protein BAD_0641.